We begin with the raw amino-acid sequence, 454 residues long: Transcription factor bHLH123 (454 aa).

A compositionally biased stretch (low complexity) spans 101 to 113 (SNANANTTSSTSS). Disordered stretches follow at residues 101–127 (SNAN…HHQA), 185–228 (ATTT…QFGS), 270–348 (AAAG…KRKE), and 398–417 (GASL…VSEE). 2 stretches are compositionally biased toward polar residues: residues 185-195 (ATTTTPNSSSG) and 207-228 (SSDQ…QFGS). A compositionally biased stretch (basic and acidic residues) spans 303 to 324 (EQPKNISEIRDSSSNEVKRGGN). A bHLH domain is found at 334–383 (KSEAASPSPAFKRKEKMGDRIAALQQLVSPFGKTDAASVLSEAIEYIKFL).

As to quaternary structure, homodimer.

The protein resides in the nucleus. This is Transcription factor bHLH123 (BHLH123) from Arabidopsis thaliana (Mouse-ear cress).